Here is a 1066-residue protein sequence, read N- to C-terminus: Ankyrin repeat protein nuc-2 (1066 aa).

Positions 1–166 (MKFGKQIQKR…KSKTKELYLS (166 aa)) constitute an SPX domain. ANK repeat units follow at residues 268–298 (RVTRTFLASINEGSLEALKVLLDTGLVDIQS), 336–366 (YGRVPLHYASMHGRLDMIDALLNASPKTINL), 370–399 (DNFTPLVHSIVRNHLECVGRLLERSARIDP), 403–432 (TDHVPLNLACQHGSVAIVELLLKHGAKILA), 435–465 (EGLYPQHLVARSGQTPEILVLLKQYGADLDQ), 470–499 (YGWTPLVHAASEGNVPCLQALLETGADPNI), and 503–532 (KDLPAMYYAAWEGHLECMKLLTPAKKEKAA). The GP-PDE domain maps to 717–1048 (ITDFETYWKA…DPFPKLPKGV (332 aa)). The segment at 923–963 (KQQQQGSCSKGDGDEDMGGTTAASRREAADERTLQSDGRRT) is disordered. The span at 946-962 (SRREAADERTLQSDGRR) shows a compositional bias: basic and acidic residues.

Its function is as follows. Controls phosphorus acquisition. The polypeptide is Ankyrin repeat protein nuc-2 (nuc-2) (Neurospora crassa (strain ATCC 24698 / 74-OR23-1A / CBS 708.71 / DSM 1257 / FGSC 987)).